Consider the following 309-residue polypeptide: Elongation factor Ts (309 aa).

The segment at 82–85 (TDFV) is involved in Mg(2+) ion dislocation from EF-Tu.

The protein belongs to the EF-Ts family.

The protein resides in the cytoplasm. Functionally, associates with the EF-Tu.GDP complex and induces the exchange of GDP to GTP. It remains bound to the aminoacyl-tRNA.EF-Tu.GTP complex up to the GTP hydrolysis stage on the ribosome. The protein is Elongation factor Ts of Rickettsia akari (strain Hartford).